Reading from the N-terminus, the 460-residue chain is ATP synthase subunit beta (460 aa).

An ATP-binding site is contributed by 150-157 (GGAGVGKT).

Belongs to the ATPase alpha/beta chains family. As to quaternary structure, F-type ATPases have 2 components, CF(1) - the catalytic core - and CF(0) - the membrane proton channel. CF(1) has five subunits: alpha(3), beta(3), gamma(1), delta(1), epsilon(1). CF(0) has three main subunits: a(1), b(2) and c(9-12). The alpha and beta chains form an alternating ring which encloses part of the gamma chain. CF(1) is attached to CF(0) by a central stalk formed by the gamma and epsilon chains, while a peripheral stalk is formed by the delta and b chains.

The protein localises to the cell inner membrane. It carries out the reaction ATP + H2O + 4 H(+)(in) = ADP + phosphate + 5 H(+)(out). Produces ATP from ADP in the presence of a proton gradient across the membrane. The catalytic sites are hosted primarily by the beta subunits. This chain is ATP synthase subunit beta, found in Edwardsiella ictaluri (strain 93-146).